Reading from the N-terminus, the 324-residue chain is DNA repair and recombination protein RadA (324 aa).

ATP is bound at residue Gly-114–Thr-121.

Belongs to the eukaryotic RecA-like protein family.

Involved in DNA repair and in homologous recombination. Binds and assemble on single-stranded DNA to form a nucleoprotein filament. Hydrolyzes ATP in a ssDNA-dependent manner and promotes DNA strand exchange between homologous DNA molecules. The polypeptide is DNA repair and recombination protein RadA (Sulfurisphaera tokodaii (strain DSM 16993 / JCM 10545 / NBRC 100140 / 7) (Sulfolobus tokodaii)).